A 152-amino-acid chain; its full sequence is CASP-like protein 5B3 (152 aa).

The Cytoplasmic segment spans residues 1-21 (MIDIPGTPGTLTGLVLRISQC). 2 consecutive transmembrane segments (helical) span residues 22-42 (VFAAGSISYMVTSGGFFSFTA) and 43-63 (FCYLIAAMGLQVIWSFGLAIL). Residues 64 to 77 (DTFALVRKKTLLSP) are Extracellular-facing. The chain crosses the membrane as a helical span at residues 78 to 98 (VLVSLFVVGDWVTSTLSLAGA). Topologically, residues 99-127 (SSSAGITVLYFGDLGSCSFEAECWKYQLS) are cytoplasmic. The chain crosses the membrane as a helical span at residues 128–148 (VALAFLCWITIAVSSLTTLWL). Residues 149-152 (LASA) lie on the Extracellular side of the membrane.

This sequence belongs to the Casparian strip membrane proteins (CASP) family. As to quaternary structure, homodimer and heterodimers. Expressed in the stele of the root and in leaves.

The protein localises to the cell membrane. The polypeptide is CASP-like protein 5B3 (Arabidopsis thaliana (Mouse-ear cress)).